The following is a 294-amino-acid chain: Putative ribose uptake protein RbsU (294 aa).

The next 10 membrane-spanning stretches (helical) occupy residues 2–24 (NAVN…VIVG), 34–56 (ILGT…GTPI), 63–82 (IFCL…TFHV), 92–114 (MPIT…LGNW), 121–140 (LIGF…TAWS), 150–172 (GAVK…SAFP), 179–198 (GFQG…IIFG), 218–235 (IFSG…LISA), 242–264 (LATG…IYIL), and 274–293 (IAVM…TAFI).

The protein belongs to the GRP transporter (TC 2.A.7.5) family.

It localises to the cell membrane. Functionally, could be involved in the uptake of ribose. This chain is Putative ribose uptake protein RbsU (rbsU), found in Latilactobacillus sakei subsp. sakei (strain 23K) (Lactobacillus sakei subsp. sakei).